The sequence spans 269 residues: Staphylococcal secretory antigen ssaA2 (269 aa).

An N-terminal signal peptide occupies residues 1 to 27 (MKKIATATIATAGFATIAIASGNQAHA). A run of 7 repeats spans residues 83–85 (YNN), 88–90 (YNN), 91–93 (YNN), 97–99 (YNN), 103–105 (YNN), 106–108 (YSN), and 115–117 (YNN). Residues 83–115 (YNNYNYNNYNNGYSYNNYSRYNNYSNNNQSYNY) are 7 X 3 AA repeats of Y-[NS]-N. The Peptidase C51 domain occupies 148–269 (MAPSSNGRSI…SQAAGYNFIH (122 aa)).

It is found in the secreted. Its function is as follows. Not known; immunogenic protein. This chain is Staphylococcal secretory antigen ssaA2 (ssaA2), found in Staphylococcus aureus (strain MSSA476).